Here is a 160-residue protein sequence, read N- to C-terminus: Protein Bel-3 (160 aa).

Homodimer.

It is found in the host cytoplasm. The protein is Protein Bel-3 (bel3) of Human spumaretrovirus (SFVcpz(hu)).